We begin with the raw amino-acid sequence, 654 residues long: Macrolide export ATP-binding/permease protein MacB (654 aa).

The ABC transporter domain occupies 6–244; sequence IEISALNRIF…TSASSATDAA (239 aa). 42–49 is an ATP binding site; it reads GTSGSGKS. Helical transmembrane passes span 279-299, 534-554, 584-604, and 617-637; these read LLTM…VAIG, IAVI…LVSV, MVCL…GALF, and VTAI…FGFL.

The protein belongs to the ABC transporter superfamily. Macrolide exporter (TC 3.A.1.122) family. Homodimer. Part of the tripartite efflux system MacAB-TolC, which is composed of an inner membrane transporter, MacB, a periplasmic membrane fusion protein, MacA, and an outer membrane component, TolC. The complex forms a large protein conduit and can translocate molecules across both the inner and outer membranes. Interacts with MacA.

It is found in the cell inner membrane. Part of the tripartite efflux system MacAB-TolC. MacB is a non-canonical ABC transporter that contains transmembrane domains (TMD), which form a pore in the inner membrane, and an ATP-binding domain (NBD), which is responsible for energy generation. Confers resistance against macrolides. The polypeptide is Macrolide export ATP-binding/permease protein MacB (Hahella chejuensis (strain KCTC 2396)).